The sequence spans 219 residues: Large ribosomal subunit protein uL3 (219 aa).

The segment at 133 to 153 (GRASHGNSRSHNVPGSIGMAQ) is disordered. Residue Q153 is modified to N5-methylglutamine.

This sequence belongs to the universal ribosomal protein uL3 family. In terms of assembly, part of the 50S ribosomal subunit. Forms a cluster with proteins L14 and L19. Post-translationally, methylated by PrmB.

One of the primary rRNA binding proteins, it binds directly near the 3'-end of the 23S rRNA, where it nucleates assembly of the 50S subunit. This is Large ribosomal subunit protein uL3 from Burkholderia mallei (strain NCTC 10247).